The following is a 355-amino-acid chain: UDP-N-acetylglucosamine--N-acetylmuramyl-(pentapeptide) pyrophosphoryl-undecaprenol N-acetylglucosamine transferase (355 aa).

UDP-N-acetyl-alpha-D-glucosamine-binding positions include 15 to 17 (TGG), asparagine 127, arginine 163, serine 191, isoleucine 244, 263 to 268 (ALTVSE), and glutamine 288.

The protein belongs to the glycosyltransferase 28 family. MurG subfamily.

It localises to the cell inner membrane. It carries out the reaction di-trans,octa-cis-undecaprenyl diphospho-N-acetyl-alpha-D-muramoyl-L-alanyl-D-glutamyl-meso-2,6-diaminopimeloyl-D-alanyl-D-alanine + UDP-N-acetyl-alpha-D-glucosamine = di-trans,octa-cis-undecaprenyl diphospho-[N-acetyl-alpha-D-glucosaminyl-(1-&gt;4)]-N-acetyl-alpha-D-muramoyl-L-alanyl-D-glutamyl-meso-2,6-diaminopimeloyl-D-alanyl-D-alanine + UDP + H(+). The protein operates within cell wall biogenesis; peptidoglycan biosynthesis. Functionally, cell wall formation. Catalyzes the transfer of a GlcNAc subunit on undecaprenyl-pyrophosphoryl-MurNAc-pentapeptide (lipid intermediate I) to form undecaprenyl-pyrophosphoryl-MurNAc-(pentapeptide)GlcNAc (lipid intermediate II). The sequence is that of UDP-N-acetylglucosamine--N-acetylmuramyl-(pentapeptide) pyrophosphoryl-undecaprenol N-acetylglucosamine transferase from Escherichia coli (strain 55989 / EAEC).